We begin with the raw amino-acid sequence, 612 residues long: MSFKATITESGKQNIWFRAIYVLSTIQDDIKITVTTNELIAWSMNETDTTLCQVRFQKSFFEEYEFKPHEIVFGENGVQVIEDTYGNSHKLYSFRVNGRHLTTISRKPDGDGIKSFTIAVNNTSTCPESLANRLIVVIEMDSLIVKEYCPQFQPIKYDPIIINLKYKRRFLDVFGTAASDRNPQEPLDPKLLDVFTNTERELTSALFNEEVESDIRKRNQLTAADEINYICCNSTLLKNFLDNCNVNVTDEVKLEINVHRLSITAFTKAVYGKNNDLLRNALSMSNTISTLDLEHYCLFTTIEDEKQDKRSHSKRREHMKSIIFKLKDFKNFITIGPSWKTTQDGNDNISLWFCHPGDPILMQMQKPGVKLELVEVTDSNINDDILEGKFIKTAISGSKEEAGLKDNKESCESPLKSKTALKRENLPHSVAGTRNSPLKVSYLTPDNGSTVAKTYRNNTARKLFVEEQSQSTNYEQDKRFRQASSVHMNMNREQSFDIGTTHEVACPRNESNSLKRSIADICNETEDPTQQSTFAKRADTTVTWGKALPAADDEVSCSNIDRKGMLKKEKLKHMQGLLNSQNDTSNHKKQDNKEMEDGLGLTQVEKPRGIFD.

At Ser436 the chain carries Phosphoserine. Residues 576–612 (GLLNSQNDTSNHKKQDNKEMEDGLGLTQVEKPRGIFD) are disordered. Residues 585–596 (SNHKKQDNKEME) show a composition bias toward basic and acidic residues.

The protein belongs to the DDC1 family. As to quaternary structure, component of the checkpoint clamp complex composed of DDC1, MEC3 and RAD17. The interaction with MEC3 is performed in a RAD17-dependent manner. The checkpoint clamp complex loads onto DNA in an ATP-dependent manner through its interaction with the RFC-RAD4 checkpoint clamp loader complex. Interacts with the DNA polymerase zeta subunit REV7 and DPB11. Phosphorylated during cell cycle S-phase and in response to DNA damage. This phosphorylation is MEC14 dependent. Also hosphorylated by CDC28.

The protein localises to the cytoplasm. The protein resides in the nucleus. In terms of biological role, component of the checkpoint clamp complex involved in the surveillance mechanism that allows the DNA repair pathways to act to restore the integrity of the DNA prior to DNA synthesis or separation of the replicated chromosomes. Associates with sites of DNA damage and modulates the MEC1 signaling pathway and the activation of RAD53 in response to DNA damage at phase G1. The complex also physically regulates DNA polymerase zeta-dependent mutagenesis by controlling the access of polymerase zeta to damaged DNA. The polypeptide is DNA damage checkpoint protein 1 (DDC1) (Saccharomyces cerevisiae (strain ATCC 204508 / S288c) (Baker's yeast)).